Reading from the N-terminus, the 143-residue chain is Submaxillary gland androgen-regulated protein 2, isoform delta (143 aa).

Residues 1 to 22 (MKPLCLVFGLCVLIGCFLSSEC) form the signal peptide. Disordered stretches follow at residues 28–52 (GQHDPTRPLSPSNPSSHFYPQPDPN) and 116–143 (VPRKKSNATPAANNFITTATAPNSTDSF). Polar residues-rich tracts occupy residues 36–45 (LSPSNPSSHF) and 122–143 (NATPAANNFITTATAPNSTDSF).

The protein resides in the secreted. In terms of biological role, may play a role in protection or detoxification. The sequence is that of Submaxillary gland androgen-regulated protein 2, isoform delta (Smr2) from Mus musculus (Mouse).